The following is an 870-amino-acid chain: DNA mismatch repair protein MutS (870 aa).

An ATP-binding site is contributed by 621 to 628; it reads GPNMAGKS. The interval 813–834 is disordered; it reads GAPRIAKSRRQRTPDPSPQFSL.

The protein belongs to the DNA mismatch repair MutS family.

In terms of biological role, this protein is involved in the repair of mismatches in DNA. It is possible that it carries out the mismatch recognition step. This protein has a weak ATPase activity. This chain is DNA mismatch repair protein MutS, found in Pelobacter propionicus (strain DSM 2379 / NBRC 103807 / OttBd1).